Consider the following 173-residue polypeptide: uncharacterized protein (173 aa).

Positions 16 to 133 (DLVLRPETIT…KHVLIRFPNK (118 aa)) constitute an MSP domain. Residues 141–163 (KKMEEDDMKQQKERNKLSNEKMG) are compositionally biased toward basic and acidic residues. The segment at 141–173 (KKMEEDDMKQQKERNKLSNEKMGIRNQNMGEKK) is disordered.

This is an uncharacterized protein from Caenorhabditis elegans.